Consider the following 359-residue polypeptide: Type-1 angiotensin II receptor B (359 aa).

Residues 1 to 25 are Extracellular-facing; the sequence is MILNSSIEDGIKRIQDDCPKAGRHN. N-linked (GlcNAc...) asparagine glycosylation occurs at N4. Angiotensin II contacts are provided by Q15 and D17. 2 disulfide bridges follow: C18/C274 and C101/C180. The helical transmembrane segment at 26 to 55 threads the bilayer; it reads YIFVMIPTLYSIIFVVGIFGNSLVVIVIYF. Residues 56–61 are Cytoplasmic-facing; that stretch reads YMKLKT. Residues 62–89 form a helical membrane-spanning segment; that stretch reads VASVFLLNLALADLCFLLTLPLWAVYTA. At 90 to 98 the chain is on the extracellular side; the sequence is MEYQWPFGN. Residues 99–125 form a helical membrane-spanning segment; the sequence is HLCKIASASVSFNLYASVFLLTCLSID. The Cytoplasmic segment spans residues 126–141; sequence RYLAIVHPMKSRLRRT. The helical transmembrane segment at 142 to 165 threads the bilayer; sequence MLVAKVTCIIIWLMAGLASLPAVI. At 166 to 190 the chain is on the extracellular side; it reads HRNVYFIENTNITVCAFHYESQNST. R167 contributes to the angiotensin II binding site. N176 carries an N-linked (GlcNAc...) asparagine glycan. F182, H183, and Y184 together coordinate angiotensin II. Residue N188 is glycosylated (N-linked (GlcNAc...) asparagine). The helical transmembrane segment at 191 to 216 threads the bilayer; it reads LPIGLGLTKNILGFVFPFVIILTSYT. Residue K199 participates in angiotensin II binding. Residues 217 to 239 lie on the Cytoplasmic side of the membrane; it reads LIWKALKKAYKIQKNTPRNDDIF. Residues 240-268 traverse the membrane as a helical segment; that stretch reads RIIMAIVLFFFFSWVPHQIFSFLDVLIQL. The Extracellular segment spans residues 269–278; it reads GVIHDCEIAD. A helical transmembrane segment spans residues 279 to 304; that stretch reads VVDTAMPITICIAYFNNCLNPLFYGF. At 305-359 the chain is on the cytoplasmic side; that stretch reads LGKKFKRYFLQLLKYIPPKARSHAGLSTKMSTLSYRPSDNMSSSARKSAYCFEVE. A lipid anchor (S-palmitoyl cysteine) is attached at C355.

Belongs to the G-protein coupled receptor 1 family. In terms of assembly, interacts with MAS1. Interacts with ARRB1. Interacts with FLNA (via filamin repeat 21); increases PKA-mediated phosphorylation of FLNA. Post-translationally, C-terminal Ser or Thr residues may be phosphorylated.

The protein localises to the cell membrane. Its function is as follows. Receptor for angiotensin II, a vasoconstricting peptide, which acts as a key regulator of blood pressure and sodium retention by the kidney. The activated receptor in turn couples to G-alpha proteins G(q) (GNAQ, GNA11, GNA14 or GNA15) and thus activates phospholipase C and increases the cytosolic Ca(2+) concentrations, which in turn triggers cellular responses such as stimulation of protein kinase C. This is Type-1 angiotensin II receptor B (Agtr1b) from Mus musculus (Mouse).